A 157-amino-acid chain; its full sequence is Putative tRNA (cytidine(34)-2'-O)-methyltransferase (157 aa).

Residues I79, G104, and I125 each coordinate S-adenosyl-L-methionine.

The protein belongs to the class IV-like SAM-binding methyltransferase superfamily. RNA methyltransferase TrmH family. TrmL subfamily.

The protein localises to the cytoplasm. The enzyme catalyses cytidine(34) in tRNA + S-adenosyl-L-methionine = 2'-O-methylcytidine(34) in tRNA + S-adenosyl-L-homocysteine + H(+). The catalysed reaction is 5-carboxymethylaminomethyluridine(34) in tRNA(Leu) + S-adenosyl-L-methionine = 5-carboxymethylaminomethyl-2'-O-methyluridine(34) in tRNA(Leu) + S-adenosyl-L-homocysteine + H(+). In terms of biological role, could methylate the ribose at the nucleotide 34 wobble position in tRNA. This Geobacillus stearothermophilus (Bacillus stearothermophilus) protein is Putative tRNA (cytidine(34)-2'-O)-methyltransferase.